The chain runs to 153 residues: Transcriptional repressor NrdR (153 aa).

Residues 3 to 34 (CPFCGYEDTRVLDSRELSEGRAIRRRRECPQC) fold into a zinc finger. Positions 49–139 (ITVIKKDGRR…VYKDFREIDQ (91 aa)) constitute an ATP-cone domain.

This sequence belongs to the NrdR family. It depends on Zn(2+) as a cofactor.

In terms of biological role, negatively regulates transcription of bacterial ribonucleotide reductase nrd genes and operons by binding to NrdR-boxes. This Fervidobacterium nodosum (strain ATCC 35602 / DSM 5306 / Rt17-B1) protein is Transcriptional repressor NrdR.